We begin with the raw amino-acid sequence, 183 residues long: Putative 3-methyladenine DNA glycosylase (183 aa).

Belongs to the DNA glycosylase MPG family.

This is Putative 3-methyladenine DNA glycosylase from Rickettsia conorii (strain ATCC VR-613 / Malish 7).